Reading from the N-terminus, the 521-residue chain is Acetylcholine receptor subunit delta (521 aa).

Residues Met-1–Ser-21 form the signal peptide. The Extracellular segment spans residues Glu-22–Lys-247. N-linked (GlcNAc...) asparagine glycosylation is found at Asn-53 and Asn-164. A disulfide bridge links Cys-151 with Cys-165. 3 consecutive transmembrane segments (helical) span residues Pro-248–Leu-272, Met-280–Ile-297, and Tyr-314–Leu-335. At His-336–Arg-475 the chain is on the cytoplasmic side. Position 394 is a phosphotyrosine; by Tyr-kinases (Tyr-394). Residues Leu-476–Leu-494 traverse the membrane as a helical segment.

It belongs to the ligand-gated ion channel (TC 1.A.9) family. Acetylcholine receptor (TC 1.A.9.1) subfamily. Pentamer of two alpha chains, and one each of the beta, delta, and gamma (in immature muscle) or epsilon (in mature muscle) chains.

It is found in the postsynaptic cell membrane. It localises to the cell membrane. It carries out the reaction K(+)(in) = K(+)(out). The catalysed reaction is Na(+)(in) = Na(+)(out). In terms of biological role, after binding acetylcholine, the AChR responds by an extensive change in conformation that affects all subunits and leads to opening of an ion-conducting channel across the plasma membrane. The chain is Acetylcholine receptor subunit delta (chrnd) from Xenopus laevis (African clawed frog).